Here is an 89-residue protein sequence, read N- to C-terminus: Small ribosomal subunit protein uS15c (89 aa).

Belongs to the universal ribosomal protein uS15 family. As to quaternary structure, part of the 30S ribosomal subunit.

The protein localises to the plastid. It is found in the chloroplast. The chain is Small ribosomal subunit protein uS15c (rps15) from Chloranthus spicatus (Chulantree).